Consider the following 148-residue polypeptide: NADPH-dependent 7-cyano-7-deazaguanine reductase (148 aa).

The active-site Thioimide intermediate is cysteine 50. Residue aspartate 57 is the Proton donor of the active site. Substrate is bound by residues 72–74 (VES) and 91–92 (HE).

The protein belongs to the GTP cyclohydrolase I family. QueF type 1 subfamily.

It is found in the cytoplasm. The enzyme catalyses 7-aminomethyl-7-carbaguanine + 2 NADP(+) = 7-cyano-7-deazaguanine + 2 NADPH + 3 H(+). Its pathway is tRNA modification; tRNA-queuosine biosynthesis. Functionally, catalyzes the NADPH-dependent reduction of 7-cyano-7-deazaguanine (preQ0) to 7-aminomethyl-7-deazaguanine (preQ1). In Helicobacter pylori (strain P12), this protein is NADPH-dependent 7-cyano-7-deazaguanine reductase.